Consider the following 380-residue polypeptide: Cytochrome b (380 aa).

4 helical membrane passes run phenylalanine 34–methionine 54, tryptophan 78–isoleucine 99, tryptophan 114–leucine 134, and phenylalanine 179–threonine 199. Residues histidine 84 and histidine 98 each coordinate heme b. Heme b-binding residues include histidine 183 and histidine 197. Histidine 202 contributes to the a ubiquinone binding site. Transmembrane regions (helical) follow at residues isoleucine 227 to serine 247, leucine 289 to histidine 309, leucine 321 to serine 341, and phenylalanine 348 to proline 368.

Belongs to the cytochrome b family. In terms of assembly, the cytochrome bc1 complex contains 11 subunits: 3 respiratory subunits (MT-CYB, CYC1 and UQCRFS1), 2 core proteins (UQCRC1 and UQCRC2) and 6 low-molecular weight proteins (UQCRH/QCR6, UQCRB/QCR7, UQCRQ/QCR8, UQCR10/QCR9, UQCR11/QCR10 and a cleavage product of UQCRFS1). This cytochrome bc1 complex then forms a dimer. Heme b is required as a cofactor.

It is found in the mitochondrion inner membrane. In terms of biological role, component of the ubiquinol-cytochrome c reductase complex (complex III or cytochrome b-c1 complex) that is part of the mitochondrial respiratory chain. The b-c1 complex mediates electron transfer from ubiquinol to cytochrome c. Contributes to the generation of a proton gradient across the mitochondrial membrane that is then used for ATP synthesis. This chain is Cytochrome b (MT-CYB), found in Vireo olivaceus (Red-eyed vireo).